Here is a 341-residue protein sequence, read N- to C-terminus: Anthranilate phosphoribosyltransferase (341 aa).

Residues glycine 80, glycine 83–aspartate 84, threonine 88, asparagine 90–threonine 93, lysine 108–serine 116, and serine 120 contribute to the 5-phospho-alpha-D-ribose 1-diphosphate site. Glycine 80 is an anthranilate binding site. Serine 92 is a Mg(2+) binding site. Asparagine 111 lines the anthranilate pocket. Arginine 166 provides a ligand contact to anthranilate. Mg(2+) contacts are provided by aspartate 225 and glutamate 226.

Belongs to the anthranilate phosphoribosyltransferase family. As to quaternary structure, homodimer. It depends on Mg(2+) as a cofactor.

The catalysed reaction is N-(5-phospho-beta-D-ribosyl)anthranilate + diphosphate = 5-phospho-alpha-D-ribose 1-diphosphate + anthranilate. The protein operates within amino-acid biosynthesis; L-tryptophan biosynthesis; L-tryptophan from chorismate: step 2/5. In terms of biological role, catalyzes the transfer of the phosphoribosyl group of 5-phosphorylribose-1-pyrophosphate (PRPP) to anthranilate to yield N-(5'-phosphoribosyl)-anthranilate (PRA). The protein is Anthranilate phosphoribosyltransferase of Brevibacillus brevis (strain 47 / JCM 6285 / NBRC 100599).